Reading from the N-terminus, the 993-residue chain is P3N-PIPO polyprotein (993 aa).

One can recognise a Peptidase S30 domain in the interval 154-298 (GVTPYSVQQL…ESTMLSTHHY (145 aa)). Catalysis depends on for P1 proteinase activity residues His-207, Asp-216, and Ser-249. An Involved in interaction with stylet and aphid transmission motif is present at residues 349–352 (KITC). The Involved in virions binding and aphid transmission motif lies at 607 to 609 (PTK). Residues 633–755 (MYIAKSGYCY…DSEMKHYRVG (123 aa)) enclose the Peptidase C6 domain. Residues Cys-641 and His-714 each act as for helper component proteinase activity in the active site.

It belongs to the potyviridae P3N-PIPO polyprotein family. Interacts (via PIPO domain) with host PCaP1 protein; this interaction may help to anchor the movement complex to the plasma membrane from which the complex could move to the plasmodesmata. Post-translationally, potyviral RNA is expressed as two polyproteins which undergo post-translational proteolytic processing. Genome polyprotein is processed by NIa-pro, P1 and HC-pro proteinases resulting in the production of at least ten individual proteins. P3N-PIPO is cleaved by P1 and HC-pro proteinases resulting in the production of three individual proteins. The P1 proteinase and the HC-pro cleave only their respective C-termini autocatalytically.

The protein resides in the host cell junction. Its subcellular location is the host plasmodesma. The catalysed reaction is Hydrolyzes a Gly-|-Gly bond at its own C-terminus, commonly in the sequence -Tyr-Xaa-Val-Gly-|-Gly, in the processing of the potyviral polyprotein.. Functionally, required for aphid transmission and also has proteolytic activity. Only cleaves a Gly-Gly dipeptide at its own C-terminus. Interacts with virions and aphid stylets. Acts as a suppressor of RNA-mediated gene silencing, also known as post-transcriptional gene silencing (PTGS), a mechanism of plant viral defense that limits the accumulation of viral RNAs. May have RNA-binding activity. Its function is as follows. Allows efficient cell to cell propagation, by bypassing the host cell wall barrier. Transports viral genome to neighboring plant cells directly through plasmosdesmata, without any budding. The sequence is that of P3N-PIPO polyprotein from Solanum betaceum (Tamarillo).